We begin with the raw amino-acid sequence, 235 residues long: Aspartate/glutamate leucyltransferase (235 aa).

The protein belongs to the R-transferase family. Bpt subfamily.

It localises to the cytoplasm. It catalyses the reaction N-terminal L-glutamyl-[protein] + L-leucyl-tRNA(Leu) = N-terminal L-leucyl-L-glutamyl-[protein] + tRNA(Leu) + H(+). The enzyme catalyses N-terminal L-aspartyl-[protein] + L-leucyl-tRNA(Leu) = N-terminal L-leucyl-L-aspartyl-[protein] + tRNA(Leu) + H(+). In terms of biological role, functions in the N-end rule pathway of protein degradation where it conjugates Leu from its aminoacyl-tRNA to the N-termini of proteins containing an N-terminal aspartate or glutamate. The polypeptide is Aspartate/glutamate leucyltransferase (Pseudomonas putida (strain ATCC 47054 / DSM 6125 / CFBP 8728 / NCIMB 11950 / KT2440)).